The sequence spans 498 residues: ATP synthase subunit beta, chloroplastic (498 aa).

172–179 lines the ATP pocket; that stretch reads GGAGVGKT.

The protein belongs to the ATPase alpha/beta chains family. As to quaternary structure, F-type ATPases have 2 components, CF(1) - the catalytic core - and CF(0) - the membrane proton channel. CF(1) has five subunits: alpha(3), beta(3), gamma(1), delta(1), epsilon(1). CF(0) has four main subunits: a(1), b(1), b'(1) and c(9-12).

Its subcellular location is the plastid. It is found in the chloroplast thylakoid membrane. It carries out the reaction ATP + H2O + 4 H(+)(in) = ADP + phosphate + 5 H(+)(out). Its function is as follows. Produces ATP from ADP in the presence of a proton gradient across the membrane. The catalytic sites are hosted primarily by the beta subunits. The sequence is that of ATP synthase subunit beta, chloroplastic from Solanum tuberosum (Potato).